A 329-amino-acid chain; its full sequence is Endonuclease 8-like 2 (329 aa).

P2 acts as the Schiff-base intermediate with DNA in catalysis. The active-site Proton donor is E3. K50 functions as the Proton donor; for beta-elimination activity in the catalytic mechanism. N6-acetyllysine is present on K50. A Phosphoserine modification is found at S68. The tract at residues 68–116 (SLLSEPLREGEQKDKARHHQEASDPSSWSPGGDSAVPSGDDGLQCLGGD) is disordered. Residues 73–89 (PLREGEQKDKARHHQEA) show a composition bias toward basic and acidic residues. Residues 90 to 102 (SDPSSWSPGGDSA) show a composition bias toward low complexity. K149 carries the post-translational modification N6-acetyllysine. N227 is a binding site for DNA. The FPG-type zinc finger occupies 280 to 316 (QIYQKEQCPAGHQVVRESLGPPGGFQRLTWWCPQCQP). R306 acts as the Proton donor; for delta-elimination activity in catalysis.

Belongs to the FPG family. As to quaternary structure, binds EP300.

The protein localises to the nucleus. It carries out the reaction 2'-deoxyribonucleotide-(2'-deoxyribose 5'-phosphate)-2'-deoxyribonucleotide-DNA = a 3'-end 2'-deoxyribonucleotide-(2,3-dehydro-2,3-deoxyribose 5'-phosphate)-DNA + a 5'-end 5'-phospho-2'-deoxyribonucleoside-DNA + H(+). Its activity is regulated as follows. Acetylation of Lys-50 leads to loss of DNA nicking activity. Involved in base excision repair of DNA damaged by oxidation or by mutagenic agents. Has DNA glycosylase activity towards 5-hydroxyuracil and other oxidized derivatives of cytosine with a preference for mismatched double-stranded DNA (DNA bubbles). Has low or no DNA glycosylase activity towards thymine glycol, 2-hydroxyadenine, hypoxanthine and 8-oxoguanine. Has AP (apurinic/apyrimidinic) lyase activity and introduces nicks in the DNA strand. Cleaves the DNA backbone by beta-delta elimination to generate a single-strand break at the site of the removed base with both 3'- and 5'-phosphates. The sequence is that of Endonuclease 8-like 2 (NEIL2) from Bos taurus (Bovine).